A 144-amino-acid polypeptide reads, in one-letter code: Angiogenin-4 (144 aa).

An N-terminal signal peptide occupies residues 1-24; sequence MTMSPCPLLLVFVLGLVVIPPTLA. The Proton acceptor role is filled by H36. Intrachain disulfides connect C49–C103, C62–C114, and C80–C129. Residues 54–58 carry the Nucleolar localization signal motif; that stretch reads KERKL. H136 functions as the Proton donor in the catalytic mechanism.

This sequence belongs to the pancreatic ribonuclease family. In terms of tissue distribution, detected in small intestine, caecum and colon, with the highest expression in Paneth cells in the intestinal epithelium.

The protein resides in the secreted. Its subcellular location is the cytoplasmic vesicle. It is found in the secretory vesicle lumen. The protein localises to the nucleus. It localises to the nucleolus. In terms of biological role, has bactericidal activity against E.faecalis and L.monocytogenes, but not against L.innocua and E.coli. Promotes angiogenesis (in vitro). Has low ribonuclease activity (in vitro). Promotes proliferation of melanoma cells, but not of endothelial cells or fibroblasts (in vitro). The protein is Angiogenin-4 (Ang4) of Mus musculus (Mouse).